Consider the following 500-residue polypeptide: Protein DETOXIFICATION 24 (500 aa).

Residues 1-20 (MSTQEEMEERLLREGSDAEG) form a disordered region. 12 helical membrane passes run 48-67 (SSLF…AFIG), 72-92 (LGLA…YGLM), 124-144 (IVDM…GPIL), 160-180 (IYPW…IQMY), 188-208 (AIVG…TWWC), 225-245 (VGSW…WCPF), 266-286 (ISSG…VLMA), 298-318 (AFSI…GFLG), 342-362 (VILT…LAFC), 384-404 (VILA…GVAV), 411-431 (IVAV…GLIL), and 441-461 (GLWS…CYII).

This sequence belongs to the multi antimicrobial extrusion (MATE) (TC 2.A.66.1) family.

The protein resides in the membrane. The protein is Protein DETOXIFICATION 24 of Arabidopsis thaliana (Mouse-ear cress).